The sequence spans 185 residues: Photosystem I assembly protein Ycf4 (185 aa).

2 consecutive transmembrane segments (helical) span residues 21 to 43 (NFCWAFLLFLGSLGFVLVGTSSY) and 63 to 85 (GLVMSFYGIAGLFISCYLWCTIL).

Belongs to the Ycf4 family.

The protein localises to the plastid. It localises to the chloroplast thylakoid membrane. Seems to be required for the assembly of the photosystem I complex. This is Photosystem I assembly protein Ycf4 from Brassica oleracea (Wild cabbage).